Reading from the N-terminus, the 146-residue chain is Cyanate hydratase (146 aa).

Residues arginine 87, glutamate 90, and serine 113 contribute to the active site.

It belongs to the cyanase family.

It catalyses the reaction cyanate + hydrogencarbonate + 3 H(+) = NH4(+) + 2 CO2. Its function is as follows. Catalyzes the reaction of cyanate with bicarbonate to produce ammonia and carbon dioxide. In Trichormus variabilis (strain ATCC 29413 / PCC 7937) (Anabaena variabilis), this protein is Cyanate hydratase.